A 381-amino-acid chain; its full sequence is Homoserine O-succinyltransferase (381 aa).

Residues 53–361 form the AB hydrolase-1 domain; sequence ILICHALSGS…DSVHGHDAFL (309 aa). The active-site Nucleophile is serine 157. Substrate is bound at residue arginine 227. Catalysis depends on residues aspartate 324 and histidine 357. Aspartate 358 lines the substrate pocket.

It belongs to the AB hydrolase superfamily. MetX family. In terms of assembly, homodimer.

Its subcellular location is the cytoplasm. The enzyme catalyses L-homoserine + succinyl-CoA = O-succinyl-L-homoserine + CoA. It functions in the pathway amino-acid biosynthesis; L-methionine biosynthesis via de novo pathway; O-succinyl-L-homoserine from L-homoserine: step 1/1. Transfers a succinyl group from succinyl-CoA to L-homoserine, forming succinyl-L-homoserine. The sequence is that of Homoserine O-succinyltransferase from Saccharophagus degradans (strain 2-40 / ATCC 43961 / DSM 17024).